We begin with the raw amino-acid sequence, 373 residues long: Dynein regulatory complex protein 9 (373 aa).

The stretch at E145 to D200 forms a coiled coil. The IQ domain maps to R336–K365.

It belongs to the DRC9 family. As to quaternary structure, component of the nexin-dynein regulatory complex (N-DRC).

The protein resides in the cytoplasm. The protein localises to the cytoskeleton. Its subcellular location is the flagellum axoneme. Component of the nexin-dynein regulatory complex (N-DRC), a key regulator of ciliary/flagellar motility which maintains the alignment and integrity of the distal axoneme and regulates microtubule sliding in motile axonemes. This Chlamydomonas reinhardtii (Chlamydomonas smithii) protein is Dynein regulatory complex protein 9.